The chain runs to 131 residues: Small ribosomal subunit protein bS6 (131 aa).

Positions 98–131 are disordered; sequence EASPMVKAKDERRERREDFANETADDSEAGDSEE. Residues 104 to 116 are compositionally biased toward basic and acidic residues; sequence KAKDERRERREDF. The segment covering 120–131 has biased composition (acidic residues); that stretch reads TADDSEAGDSEE.

It belongs to the bacterial ribosomal protein bS6 family.

Functionally, binds together with bS18 to 16S ribosomal RNA. The protein is Small ribosomal subunit protein bS6 of Klebsiella pneumoniae subsp. pneumoniae (strain ATCC 700721 / MGH 78578).